Consider the following 192-residue polypeptide: Ion-translocating oxidoreductase complex subunit B (192 aa).

The hydrophobic stretch occupies residues Met-1–Ser-26. The 4Fe-4S domain maps to Glu-32–Val-91. [4Fe-4S] cluster is bound by residues Cys-49, Cys-52, Cys-57, Cys-74, Cys-117, Cys-120, Cys-123, Cys-127, Cys-147, Cys-150, Cys-153, and Cys-157. 2 consecutive 4Fe-4S ferredoxin-type domains span residues Met-108–Arg-137 and Ala-138–Val-167.

This sequence belongs to the 4Fe4S bacterial-type ferredoxin family. RnfB subfamily. The complex is composed of six subunits: RsxA, RsxB, RsxC, RsxD, RsxE and RsxG. The cofactor is [4Fe-4S] cluster.

The protein localises to the cell inner membrane. Part of a membrane-bound complex that couples electron transfer with translocation of ions across the membrane. Required to maintain the reduced state of SoxR. This is Ion-translocating oxidoreductase complex subunit B from Escherichia coli O139:H28 (strain E24377A / ETEC).